The following is a 190-amino-acid chain: Transcription termination/antitermination protein NusG (190 aa).

The KOW domain occupies 138 to 166 (VGEIVTVTEGPFETFTGTVEEVDQEKARL).

The protein belongs to the NusG family.

Its function is as follows. Participates in transcription elongation, termination and antitermination. This is Transcription termination/antitermination protein NusG from Rickettsia bellii (strain RML369-C).